Consider the following 488-residue polypeptide: Zinc metalloproteinase-disintegrin VMP-II (488 aa).

A signal peptide spans 1–20 (MIQVLLVTICLAVFPYQGSS). Residues 21-191 (IILESGNVND…KASQSNIPPE (171 aa)) constitute a propeptide that is removed on maturation. In terms of domain architecture, Peptidase M12B spans 198 to 396 (RYIELVVVAD…STTRCLHNEP (199 aa)). 2 residues coordinate Ca(2+): E201 and D285. Residue N296 is glycosylated (N-linked (GlcNAc...) asparagine). 3 disulfide bridges follow: C309-C391, C349-C373, and C351-C356. H334 contacts Zn(2+). E335 is a catalytic residue. Positions 338 and 344 each coordinate Zn(2+). Ca(2+)-binding residues include C391, N394, N409, E413, E416, and D419. One can recognise a Disintegrin domain in the interval 404 to 488 (PPFCGNYFKE…ADCPRNGLYG (85 aa)). 7 disulfides stabilise this stretch: C407–C426, C418–C436, C420–C431, C430–C453, C444–C450, C449–C474, and C462–C481. Residues 466 to 468 (RGD) carry the Cell attachment site motif.

Belongs to the venom metalloproteinase (M12B) family. P-II subfamily. P-IIb sub-subfamily. As to quaternary structure, homodimer; disulfide-linked (disintegrin). Requires Zn(2+) as cofactor. Expressed by the venom gland.

It is found in the secreted. In terms of biological role, zinc metalloproteinase-disintegrin VMP-II: inhibits ADP-induced platelet aggregation (probably by binding integrin alpha-IIb/beta-3 (ITGA2B/ITGB3)) and degrades fibrinogen. Recombinant disintegrin r-Cam-dis (413-488): this recombinant protein inhibits platelet adhesion to fibrinogen (IC(50) is 1 nM), inhibits collagen- (IC(50) is 18 nM) and ADP-induced (IC(50) is 6 nM) platelet aggregation, and also inhibits platelet function on clot retraction. May act by binding integrin alpha-IIb/beta-3 (ITGA2B/ITGB3). The protein is Zinc metalloproteinase-disintegrin VMP-II of Crotalus adamanteus (Eastern diamondback rattlesnake).